The sequence spans 510 residues: Coatomer subunit delta (510 aa).

The MHD domain occupies 270-510 (MESVHMKIEE…TFLVDKYEIL (241 aa)).

The protein belongs to the adaptor complexes medium subunit family. Delta-COP subfamily. Oligomeric complex that consists of at least the alpha, beta, beta', gamma, delta, epsilon and zeta subunits.

Its subcellular location is the cytoplasm. The protein localises to the golgi apparatus membrane. It is found in the cytoplasmic vesicle. The protein resides in the COPI-coated vesicle membrane. Functionally, the coatomer is a cytosolic protein complex that binds to dilysine motifs and reversibly associates with Golgi non-clathrin-coated vesicles, which further mediate biosynthetic protein transport from the ER, via the Golgi up to the trans Golgi network. Coatomer complex is required for budding from Golgi membranes, and is essential for the retrograde Golgi-to-ER transport of dilysine-tagged proteins. In mammals, the coatomer can only be recruited by membranes associated to ADP-ribosylation factors (ARFs), which are small GTP-binding proteins; the complex also influences the Golgi structural integrity, as well as the processing, activity, and endocytic recycling of LDL receptors. The chain is Coatomer subunit delta (ARCN1) from Gallus gallus (Chicken).